A 151-amino-acid chain; its full sequence is MSSESRSASSPVAPDDIEEGVVLRPKFDAHGLVTVVATDARTGDVLMVAFMNDEALDRTIQTGEAWYYSRSRKRLWKKGETSGHIQKVLEMRVDCDQDAVWIKVDQTGGAACHTGRHSCFYRRIDRGGDGAPVLIETDAERKFDPDKVYGK.

Mg(2+) is bound at residue D94. Zn(2+) is bound at residue C95. The Mg(2+) site is built by D96 and D98. Residues C112 and C119 each contribute to the Zn(2+) site.

It belongs to the PRA-CH family. In terms of assembly, homodimer. Mg(2+) is required as a cofactor. Requires Zn(2+) as cofactor.

Its subcellular location is the cytoplasm. It catalyses the reaction 1-(5-phospho-beta-D-ribosyl)-5'-AMP + H2O = 1-(5-phospho-beta-D-ribosyl)-5-[(5-phospho-beta-D-ribosylamino)methylideneamino]imidazole-4-carboxamide. It participates in amino-acid biosynthesis; L-histidine biosynthesis; L-histidine from 5-phospho-alpha-D-ribose 1-diphosphate: step 3/9. Catalyzes the hydrolysis of the adenine ring of phosphoribosyl-AMP. The protein is Phosphoribosyl-AMP cyclohydrolase of Rhodopseudomonas palustris (strain TIE-1).